The chain runs to 507 residues: Proton-coupled zinc antiporter SLC30A1 (507 aa).

The Cytoplasmic portion of the chain corresponds to 1 to 10 (MGCWGRNRGR). The helical transmembrane segment at 11–31 (LLCMLALTFMFMVLEVVVSRV) threads the bilayer. At 32–35 (TSSL) the chain is on the extracellular side. A helical transmembrane segment spans residues 36 to 56 (AMLSDSFHMLSDVLALVVALV). The Zn(2+) site is built by H43 and D47. Over 57–78 (AERFARRTHATQKNTFGWIRAE) the chain is Cytoplasmic. Residues 79–99 (VMGALVNAIFLTGLCFAILLE) traverse the membrane as a helical segment. Topologically, residues 100–113 (AIERFIEPHEMQQP) are extracellular. The helical transmembrane segment at 114-134 (LVVLGVGVAGLLVNVLGLCLF) threads the bilayer. Over 135–248 (HHHSGFSQDS…RAGQLNMRGV (114 aa)) the chain is Cytoplasmic. Positions 142-217 (QDSGHGHSHG…DPENPRSGDT (76 aa)) are disordered. The segment at 146 to 158 (HGHSHGGHGHGHG) is 6 X 2 AA approximate repeats of H-G. The segment covering 147 to 167 (GHSHGGHGHGHGLPKGPRVKS) has biased composition (basic residues). Polar residues predominate over residues 189–201 (TNTLVANTSNSNG). Residues 249 to 269 (FLHVLGDALGSVIVVVNALVF) form a helical membrane-spanning segment. 2 residues coordinate Zn(2+): H251 and D255. Residues 270-308 (YFSWKGCSEGDFCVNPCFPDPCKAFVEIINSTHASVYEA) lie on the Extracellular side of the membrane. Residue N299 is glycosylated (N-linked (GlcNAc...) asparagine). The chain crosses the membrane as a helical span at residues 309-329 (GPCWVLYLDPTLCVVMVCILL). Topologically, residues 330–507 (YTTYPLLKES…MPNKQPESSL (178 aa)) are cytoplasmic. At S506 the chain carries Phosphoserine.

This sequence belongs to the cation diffusion facilitator (CDF) transporter (TC 2.A.4) family. SLC30A subfamily. As to quaternary structure, homodimer. Interacts with TMEM163. Interacts and forms a complex with TMC6 and TMC8; the interaction regulates zinc transport into the ER. In terms of assembly, (Microbial infection) Interacts with human papillomavirus 16/HPV16 protein E5; the interaction alleviates SLC30A1-mediated transcription factors inhibition. In terms of processing, N-glycosylated at Asn-299. N-glycosylation promotes endocytosis and degradation through the proteasomal or lysosomal pathways.

Its subcellular location is the cell membrane. It localises to the basolateral cell membrane. The protein resides in the cytoplasmic vesicle membrane. The protein localises to the cytoplasm. It is found in the endoplasmic reticulum membrane. Its subcellular location is the golgi apparatus membrane. It localises to the nucleus membrane. The catalysed reaction is Zn(2+)(in) + 2 H(+)(out) = Zn(2+)(out) + 2 H(+)(in). Functionally, zinc ion:proton antiporter that could function at the plasma membrane mediating zinc efflux from cells against its electrochemical gradient protecting them from intracellular zinc accumulation and toxicity. Alternatively, could prevent the transport to the plasma membrane of CACNB2, the L-type calcium channels regulatory subunit, through a yet to be defined mechanism. By modulating the expression of these channels at the plasma membrane, could prevent calcium and zinc influx into cells. By the same mechanism, could also prevent L-type calcium channels-mediated heavy metal influx into cells. In some cells, could also function as a zinc ion:proton antiporter mediating zinc entry into the lumen of cytoplasmic vesicles. In macrophages, can increase zinc ions concentration into the lumen of cytoplasmic vesicles containing engulfed bacteria and could help inactivate them. Forms a complex with TMC6/EVER1 and TMC8/EVER2 at the ER membrane of keratynocytes which facilitates zinc uptake into the ER. Down-regulates the activity of transcription factors induced by zinc and cytokines. The polypeptide is Proton-coupled zinc antiporter SLC30A1 (Homo sapiens (Human)).